The sequence spans 1388 residues: DNA-directed RNA polymerase subunit beta (1388 aa).

It belongs to the RNA polymerase beta chain family. The RNAP catalytic core consists of 2 alpha, 1 beta, 1 beta' and 1 omega subunit. When a sigma factor is associated with the core the holoenzyme is formed, which can initiate transcription.

It carries out the reaction RNA(n) + a ribonucleoside 5'-triphosphate = RNA(n+1) + diphosphate. In terms of biological role, DNA-dependent RNA polymerase catalyzes the transcription of DNA into RNA using the four ribonucleoside triphosphates as substrates. The sequence is that of DNA-directed RNA polymerase subunit beta from Xylella fastidiosa (strain 9a5c).